The sequence spans 109 residues: Large ribosomal subunit protein uL22 (109 aa).

It belongs to the universal ribosomal protein uL22 family. In terms of assembly, part of the 50S ribosomal subunit.

In terms of biological role, this protein binds specifically to 23S rRNA; its binding is stimulated by other ribosomal proteins, e.g. L4, L17, and L20. It is important during the early stages of 50S assembly. It makes multiple contacts with different domains of the 23S rRNA in the assembled 50S subunit and ribosome. Its function is as follows. The globular domain of the protein is located near the polypeptide exit tunnel on the outside of the subunit, while an extended beta-hairpin is found that lines the wall of the exit tunnel in the center of the 70S ribosome. This chain is Large ribosomal subunit protein uL22, found in Laribacter hongkongensis (strain HLHK9).